The sequence spans 236 residues: Purine nucleoside phosphorylase DeoD-type (236 aa).

An a purine D-ribonucleoside-binding site is contributed by His-4. Phosphate is bound by residues Gly-20, Arg-24, Arg-43, and 87–90 (RVGT). Residues 178-180 (EME) and 202-203 (SD) each bind a purine D-ribonucleoside. Asp-203 serves as the catalytic Proton donor.

This sequence belongs to the PNP/UDP phosphorylase family. As to quaternary structure, homohexamer; trimer of homodimers.

The enzyme catalyses a purine D-ribonucleoside + phosphate = a purine nucleobase + alpha-D-ribose 1-phosphate. It catalyses the reaction a purine 2'-deoxy-D-ribonucleoside + phosphate = a purine nucleobase + 2-deoxy-alpha-D-ribose 1-phosphate. Catalyzes the reversible phosphorolytic breakdown of the N-glycosidic bond in the beta-(deoxy)ribonucleoside molecules, with the formation of the corresponding free purine bases and pentose-1-phosphate. This chain is Purine nucleoside phosphorylase DeoD-type, found in Geobacillus kaustophilus (strain HTA426).